The following is a 306-amino-acid chain: Replication termination factor 2 (306 aa).

The interval 192 to 306 (RAKLEKKTKK…HWVTHTSYCF (115 aa)) is disordered. A compositionally biased stretch (basic and acidic residues) spans 226 to 240 (GKSEEADPDPREKKS). At S287 the chain carries Phosphoserine.

This sequence belongs to the rtf2 family. In terms of assembly, interacts with DDI2; probably also interacts with DDI1. In terms of processing, undergoes proteasomal degradation, via DDI1 and DDI2. Removal from stalled replisomes and degradation are required for genome stability.

It localises to the chromosome. Its function is as follows. Replication termination factor which is a component of the elongating replisome. Required for ATR pathway signaling upon DNA damage and has a positive activity during DNA replication. Might function to facilitate fork pausing at replication fork barriers like the rDNA. May be globally required to stimulate ATR signaling after the fork stalls or encounters a lesion. Interacts with nascent DNA. This is Replication termination factor 2 from Rattus norvegicus (Rat).